A 611-amino-acid polypeptide reads, in one-letter code: MGDLARLPLLEKAPTTHAGLLAWVEEVAELTQPDRIHWVDGTEEEYTRLTGELVEAGTLTRLNPELFPNSFAAFSDPADVARVEEQTFICSENQRDAGFTNNWMAPAEMKQKLRGLFAGSMRGRTMYVIPFVMGHLDAEDPKFGVEITDSAYVVASMRIMANIGTEVLDKITATNAFFVPALHSLGAPLAPGQADVAWPCNPDKWIVHFPEERSIWSFGSGYGGNALLGKKCYALRIASVMARDEGWLAEHMLILKLTSPEKKSYYMSAAFPSACGKTNLALLDPTIEGWEVETLGDDITWMRIGKEGELRATNPEAGLFGVAPGTGWGTNPNAMRAIAKGHSIFTNVALTDDGGVWWEGMTEETPAHLTDWQGNSWTPDSDKPAAHPNSRFCTPISQIDMLAEEYYSPEGVELSAILFGGRRKTTVPLVTQARSWTNGIFMGSTLSSETTAAAAGQVGVLRRDPMAMLPFIGYDAGDYLKHWISVSGKANPERLPHIFLVNWFRRTADGDFAWPGFGDNARVLKWAIERIEGKADAIETPIGFVPAGHALDLTGLDLTHAHVEDAVRVDREEWDAELASIEEWYAKFGDSLPEALRAELDALKERMADHS.

Substrate contacts are provided by residues Arg82 and 222-224 (YGG). The Mn(2+) site is built by Lys231 and His251. Ser273 contributes to the substrate binding site. Residue 274 to 279 (ACGKTN) coordinates GTP. The active site involves Cys275. Asp298 contributes to the Mn(2+) binding site. Substrate is bound at residue 389–391 (NSR). GTP contacts are provided by residues Arg391, Arg422, and 517 to 520 (FGDN).

It belongs to the phosphoenolpyruvate carboxykinase [GTP] family. In terms of assembly, monomer. It depends on Mn(2+) as a cofactor.

It localises to the cytoplasm. It catalyses the reaction oxaloacetate + GTP = phosphoenolpyruvate + GDP + CO2. It functions in the pathway carbohydrate biosynthesis; gluconeogenesis. Functionally, catalyzes the conversion of oxaloacetate (OAA) to phosphoenolpyruvate (PEP), the rate-limiting step in the metabolic pathway that produces glucose from lactate and other precursors derived from the citric acid cycle. This chain is Phosphoenolpyruvate carboxykinase [GTP], found in Arthrobacter sp. (strain FB24).